A 126-amino-acid chain; its full sequence is Profilin (126 aa).

This sequence belongs to the profilin family. Occurs in many kinds of cells as a complex with monomeric actin in a 1:1 ratio.

The protein localises to the cytoplasm. Its subcellular location is the cytoskeleton. Its function is as follows. Binds to actin and affects the structure of the cytoskeleton. At high concentrations, profilin prevents the polymerization of actin, whereas it enhances it at low concentrations. By binding to PIP2, it inhibits the formation of IP3 and DG. This Saccharomyces cerevisiae (strain ATCC 204508 / S288c) (Baker's yeast) protein is Profilin (PFY1).